The sequence spans 158 residues: Large ribosomal subunit protein uL13 (158 aa).

This sequence belongs to the universal ribosomal protein uL13 family. As to quaternary structure, part of the 50S ribosomal subunit.

Functionally, this protein is one of the early assembly proteins of the 50S ribosomal subunit, although it is not seen to bind rRNA by itself. It is important during the early stages of 50S assembly. This is Large ribosomal subunit protein uL13 from Rickettsia canadensis (strain McKiel).